Reading from the N-terminus, the 181-residue chain is Bradykinin-potentiating and C-type natriuretic peptides (181 aa).

Residues 1–23 (MFVSRLAASGLLLLALLAVSLDG) form the signal peptide. A propeptide spanning residues 24–30 (KPLQQWS) is cleaved from the precursor. Residue Gln31 is modified to Pyrrolidone carboxylic acid. A propeptide spanning residues 41–43 (LVV) is cleaved from the precursor. Gln44 bears the Pyrrolidone carboxylic acid mark. Propeptides lie at residues 50-78 (TQLQ…AALD) and 90-157 (GSKA…KGLA). The interval 74 to 153 (EAALDTPPAG…GGGGGGARRL (80 aa)) is disordered. Positions 104-114 (SKGASATSAAS) are enriched in low complexity. Residues 140–150 (AGGGGGGGGGA) are compositionally biased toward gly residues. Cysteines 165 and 181 form a disulfide.

The protein in the N-terminal section; belongs to the bradykinin-potentiating peptide family. This sequence in the C-terminal section; belongs to the natriuretic peptide family. Venom gland.

Its subcellular location is the secreted. Bradykinin-potentiating peptide both inhibits the activity of the angiotensin-converting enzyme (ACE) and enhances the action of bradykinin by inhibiting the peptidases that inactivate it. It acts as an indirect hypotensive agent. Functionally, antagonizes the vasodilatory actions of bradykinin at the B2 bradykinin receptor. Has no demonstrable hypotensive activity when injected intravenously in rats. In terms of biological role, has a vasorelaxant activity in rat aortic strips and a diuretic potency in anesthetized rats. May act by activating natriuretic receptors (NPR1 and/or NPR2). This Crotalus durissus collilineatus (Brazilian rattlesnake) protein is Bradykinin-potentiating and C-type natriuretic peptides.